The primary structure comprises 469 residues: 2-amino-4-ketopentanoate thiolase beta subunit (469 aa).

An N6-(pyridoxal phosphate)lysine modification is found at Lys-102. Residues Asn-128 and 238–242 (AGGGN) each bind pyridoxal 5'-phosphate.

Belongs to the threonine synthase family. Heterodimer with OrtA. Pyridoxal 5'-phosphate is required as a cofactor.

The catalysed reaction is D-alanine + acetyl-CoA = (2R)-2-amino-4-oxopentanoate + CoA. With respect to regulation, completely inhibited by p-chloromercuribenzoate (p-ClHgBzO) and acetyl-CoA, and partially inhibited by N-ethylmaleimide. Involved in the ornithine fermentation pathway. Catalyzes the thiolytic cleavage of 2-amino-4-ketopentanoate (AKP) with coenzyme A (CoA) to form acetyl-CoA and alanine. It is strictly specific for AKP. The chain is 2-amino-4-ketopentanoate thiolase beta subunit from Acetoanaerobium sticklandii (strain ATCC 12662 / DSM 519 / JCM 1433 / CCUG 9281 / NCIMB 10654 / HF) (Clostridium sticklandii).